Consider the following 231-residue polypeptide: Protein fmp52-2, mitochondrial (231 aa).

Residues 1-46 (MTMTTAAVFGCTGAVGSQILATLLAIDTFPSVKTISRRLPNVQSPK) constitute a mitochondrion transit peptide.

The protein belongs to the FMP52 family.

Its subcellular location is the mitochondrion outer membrane. The protein is Protein fmp52-2, mitochondrial (fmp522) of Neosartorya fischeri (strain ATCC 1020 / DSM 3700 / CBS 544.65 / FGSC A1164 / JCM 1740 / NRRL 181 / WB 181) (Aspergillus fischerianus).